We begin with the raw amino-acid sequence, 290 residues long: Concanavalin-A (290 aa).

The N-terminal stretch at 1-29 is a signal peptide; that stretch reads MAISKKSSLFLPIFTFITMFLMVVNKVSS. The a carbohydrate site is built by Asp119 and Arg139. Ca(2+) is bound at residue Asp119. A propeptide spanning residues 149–163 is cleaved from the precursor; sequence VIRNSTTIDFNAAYN. Asn152 carries N-linked (GlcNAc...) asparagine glycosylation. Residues Glu171 and Asp173 each coordinate Mn(2+). Ca(2+)-binding residues include Asp173, Tyr175, Asn177, and Asp182. Residues Asp182 and His187 each coordinate Mn(2+). 262 to 263 is a binding site for a carbohydrate; the sequence is LY. Positions 282 to 290 are excised as a propeptide; that stretch reads EIPDIATVV.

Belongs to the leguminous lectin family. As to quaternary structure, homotetramer. In terms of processing, the mature chain consists of residues 164-281 followed by 30-148. To form a mature chain the precursor undergoes further post-translational modification after removal of the signal sequence; cleavage after Asn at positions Asn-148, Asn-163, and Asn-281 is followed by transposition and ligation (By formation of a new peptide bond) of residues 164-281 and 30-148.

Its function is as follows. Glucose/D-mannose/rhamnose specific lectin. Has hemagglutinating activity towards rabbit erythrocytes. Has mitogenic activity towards murine splenocytes that is inhibited by glucose. Inhibits HIV-1 reverse transcriptase with an IC(50) of 35 uM. Has a potent antiproliferative activity against L1210 leukemia cells in vitro that is not inhibited by glucose. Inhibits translation in cell-free rabbit reticulocyte system with an IC(50) of 2.08 uM. Lacks anti-fungal activity against M.arachidicola, B.cenera and F.oxysporum. This Canavalia gladiata (Sword bean) protein is Concanavalin-A.